Reading from the N-terminus, the 151-residue chain is Small ribosomal subunit protein uS11A (151 aa).

The tract at residues 131 to 151 (DVTPIPSDSTRRKGGRRGRRL) is disordered. The span at 142–151 (RKGGRRGRRL) shows a compositional bias: basic residues.

It belongs to the universal ribosomal protein uS11 family.

The protein is Small ribosomal subunit protein uS11A of Drosophila melanogaster (Fruit fly).